A 464-amino-acid chain; its full sequence is Aspartyl protease AED1 (464 aa).

The N-terminal stretch at 1 to 25 is a signal peptide; sequence MSIMRNFLSMIIMLCVCLNWCFAEG. One can recognise a Peptidase A1 domain in the interval 132–460; sequence YIVTIGIGTP…DVAGGRVGFA (329 aa). Residues aspartate 150 and aspartate 345 contribute to the active site. Cysteine 384 and cysteine 425 are disulfide-bonded.

Belongs to the peptidase A1 family.

Its subcellular location is the secreted. The protein resides in the extracellular space. It localises to the apoplast. Its function is as follows. Aspartyl protease involved in a homeostatic feedback mechanism regulating systemic immunity. Has only mild or no influence on local defenses. Acts downstream of salicylic acid to suppress systemic immunity. This Arabidopsis thaliana (Mouse-ear cress) protein is Aspartyl protease AED1.